The chain runs to 255 residues: Transmembrane protein 81 (255 aa).

The N-terminal stretch at 1-30 is a signal peptide; the sequence is MKVLATSFVLGSLGLAFYLPLVVTTPKTLA. Residues 31–226 are Extracellular-facing; that stretch reads IPEKLQEAVG…HPKWKKKVAS (196 aa). The N-linked (GlcNAc...) asparagine glycan is linked to Asn45. Residues 83-171 form the Ig-like domain; sequence TNWICGMLHF…VQLVKNLRLV (89 aa). Cys104 and Cys160 form a disulfide bridge. The helical transmembrane segment at 227–247 threads the bilayer; the sequence is ALGIGIAIGVVGGVLVRIVLC. Over 248-255 the chain is Cytoplasmic; it reads ALRGGLQQ.

Forms a complex with IZUMO1 and SPACA6 on spermatocyte cell membrane required for fertilization. In terms of tissue distribution, highly expressed in sperm (at protein level).

The protein localises to the cell membrane. In terms of biological role, essential fertilization factor required for male fertility. Part of a conserved trimeric sperm complex with the essential fertilization factors IZUMO1 and SPACA6 which bridges sperm and oocyte membranes during fertilization by binding to IZUMO1R/JUNO on the oocyte. In Homo sapiens (Human), this protein is Transmembrane protein 81.